The primary structure comprises 753 residues: Protein transport protein SEC23-1 (753 aa).

Residues Cys-56, Cys-61, Cys-80, and Cys-83 each contribute to the Zn(2+) site.

It belongs to the SEC23/SEC24 family. SEC23 subfamily. As to quaternary structure, the COPII coat is composed of at least 5 proteins: the SEC23/24 complex, the SEC13/31 complex, and the protein SAR1.

It localises to the cytoplasm. Its subcellular location is the cytoplasmic vesicle. The protein localises to the COPII-coated vesicle membrane. The protein resides in the endoplasmic reticulum membrane. It is found in the golgi apparatus membrane. Its function is as follows. Component of the coat protein complex II (COPII) which promotes the formation of transport vesicles from the endoplasmic reticulum (ER). The coat has two main functions, the physical deformation of the endoplasmic reticulum membrane into vesicles and the selection of cargo molecules. The chain is Protein transport protein SEC23-1 (SEC231) from Candida glabrata (strain ATCC 2001 / BCRC 20586 / JCM 3761 / NBRC 0622 / NRRL Y-65 / CBS 138) (Yeast).